We begin with the raw amino-acid sequence, 312 residues long: MGRCRVLVVGGTGYIGKRIVKASIEHGHDTYVLKRPETGLDIEKFQLLLSFKKQGAHLVEASFSDHESLVRAVKLVDVVICTVSGAHSRSLLLQLKLVEAIKEAGNVKRFIPSEFGMDPARMGDALEPGRETFDLKMVVRKAIEDANIPHTYISANCFGGYFVGNLSQLGPLTPPSDKVTIYGDGNVKVVYMDEDDVATYTIMTIEDDRTLNKTMYLRPPENVITHRQLVETWEKLSGNQLQKTELSSQDFLALMEGKDVAEQVVIGHLYHIYYEGCLTNFDIDAAQDQVEASSLYPEVEYIRMKDYLMIYL.

Residues 10–16 (GGTGYIG), R35, and K44 contribute to the NADP(+) site. The active-site Proton acceptor is K136. R140 serves as a coordination point for NADP(+). H268 serves as a coordination point for substrate.

This sequence belongs to the NmrA-type oxidoreductase family. Isoflavone reductase subfamily. As to quaternary structure, dimer. As to expression, expressed in seeds and roots, but not in stems. Detected in leaves.

The catalysed reaction is (-)-lariciresinol + NADP(+) = (-)-pinoresinol + NADPH + H(+). It catalyses the reaction (+)-secoisolariciresinol + NADP(+) = (-)-lariciresinol + NADPH + H(+). Its function is as follows. Reductase involved in lignan biosynthesis. Catalyzes the enantioselective conversion of (-)-pinoresinol into (-)-lariciresinol and of (-)-lariciresinol into (+)-secoisolariciresinol. Abstracts the 4R-hydride from the NADPH cofactor during catalysis. The protein is Bifunctional pinoresinol-lariciresinol reductase 1 (PLR_Lu1) of Linum usitatissimum (Flax).